A 389-amino-acid polypeptide reads, in one-letter code: Alanine racemase TOXG (389 aa).

Lys235 carries the post-translational modification N6-(pyridoxal phosphate)lysine.

The protein belongs to the threonine aldolase family. The cofactor is pyridoxal 5'-phosphate.

It carries out the reaction L-alanine = D-alanine. It functions in the pathway mycotoxin biosynthesis; HC-toxin biosynthesis. Alanine racemase, part of the diffuse TOX2 gene cluster that mediates the biosynthesis of the HC-toxin, cyclic tetrapeptide of structure cyclo(D-Pro-L-Ala-D-Ala-L-Aeo), where Aeo stands for 2-amino-9,10-epoxi-8-oxodecanoic acid. HC-toxin is a determinant of specificity and virulence in the interaction between the producing fungus and its host, maize. TOXG catalyzes the conversion of L-alanine into D-alanine, an essential precursor for the production of the major forms of HC-toxin by the non-ribosomal peptide synthetase HTS1. The protein is Alanine racemase TOXG of Cochliobolus carbonum (Maize leaf spot fungus).